The primary structure comprises 556 residues: Urocanate hydratase (556 aa).

NAD(+)-binding positions include 52–53 (GG), Gln-130, 176–178 (GMG), Glu-196, Arg-201, 242–243 (NA), 263–267 (QTSAH), 273–274 (YL), and Tyr-322. Cys-410 is a catalytic residue. Residue Gly-492 participates in NAD(+) binding.

Belongs to the urocanase family. It depends on NAD(+) as a cofactor.

The protein resides in the cytoplasm. The enzyme catalyses 4-imidazolone-5-propanoate = trans-urocanate + H2O. It participates in amino-acid degradation; L-histidine degradation into L-glutamate; N-formimidoyl-L-glutamate from L-histidine: step 2/3. Functionally, catalyzes the conversion of urocanate to 4-imidazolone-5-propionate. This chain is Urocanate hydratase, found in Shewanella frigidimarina (strain NCIMB 400).